Here is a 293-residue protein sequence, read N- to C-terminus: Probable metal transport system membrane protein CT_417 (293 aa).

7 consecutive transmembrane segments (helical) span residues 18–38 (SLLA…YIVV), 41–61 (IVSI…IALW), 68–88 (LPIS…ICIG), 101–121 (IISM…SKLP), 135–155 (ILWV…FIVA), 187–207 (LLLI…GVIL), and 242–262 (FLGI…IAIL).

The protein belongs to the ABC-3 integral membrane protein family.

It localises to the cell inner membrane. In terms of biological role, part of an ATP-driven transport system CT_415/CT_416/CT_417 for a metal. This is Probable metal transport system membrane protein CT_417 from Chlamydia trachomatis serovar D (strain ATCC VR-885 / DSM 19411 / UW-3/Cx).